Here is a 530-residue protein sequence, read N- to C-terminus: Chaperonin GroEL, chloroplastic (530 aa).

ATP is bound by residues 29 to 32, 86 to 90, Gly414, 480 to 482, and Asp496; these read TLGP, DGTTT, and DAL.

It belongs to the chaperonin (HSP60) family. In terms of assembly, forms a cylinder of 14 subunits composed of two heptameric rings stacked back-to-back. Interacts with the co-chaperonin GroES.

The protein localises to the plastid. Its subcellular location is the chloroplast. The enzyme catalyses ATP + H2O + a folded polypeptide = ADP + phosphate + an unfolded polypeptide.. In terms of biological role, together with its co-chaperonin GroES, plays an essential role in assisting protein folding. The GroEL-GroES system forms a nano-cage that allows encapsulation of the non-native substrate proteins and provides a physical environment optimized to promote and accelerate protein folding. In Cyanidium caldarium (Red alga), this protein is Chaperonin GroEL, chloroplastic.